An 829-amino-acid chain; its full sequence is Venom phosphodiesterase CdcPDE (829 aa).

SMB domains lie at 8–51 and 52–96; these read PQVS…VLPT and QSWS…GETS. Intrachain disulfides connect Cys-12/Cys-16, Cys-12/Cys-29, Cys-16/Cys-47, Cys-27/Cys-29, Cys-27/Cys-40, Cys-33/Cys-39, Cys-40/Cys-47, Cys-56/Cys-61, Cys-56/Cys-73, Cys-61/Cys-91, Cys-71/Cys-73, Cys-71/Cys-84, Cys-77/Cys-83, Cys-84/Cys-91, Cys-102/Cys-148, and Cys-110/Cys-322. An N-linked (GlcNAc...) asparagine glycan is attached at Asn-17. The Cell attachment site signature appears at 36-38; it reads RQA. A divalent metal cation is bound by residues Asp-125 and Thr-163. The active-site AMP-threonine intermediate is Thr-163. N-linked (GlcNAc...) asparagine glycosylation is found at Asn-194 and Asn-237. Position 249 (Lys-249) interacts with AMP. 4 residues coordinate a divalent metal cation: Asp-283, His-287, Asp-330, and His-331. His-287 lines the AMP pocket. 6 disulfide bridges follow: Cys-338/Cys-435, Cys-386/Cys-771, Cys-519/Cys-577, Cys-532/Cys-632, Cys-534/Cys-617, and Cys-740/Cys-750. Asn-383 is a glycosylation site (N-linked (GlcNAc...) asparagine). His-440 serves as a coordination point for a divalent metal cation. Residues Asn-572 and Asn-652 are each glycosylated (N-linked (GlcNAc...) asparagine).

It belongs to the nucleotide pyrophosphatase/phosphodiesterase family. In terms of assembly, monomer. The cofactor is a divalent metal cation. N-glycosylated. Glycosylation counts for an increased mass of ~9%. Post-translationally, contains 16 disulfide bonds. In terms of tissue distribution, expressed by venom gland.

Its subcellular location is the secreted. It catalyses the reaction ADP + H2O = AMP + phosphate + H(+). Hydrolyzes ADP with high activity. Shows weak or no activity on 5'-AMP, 5'-GMP, 3'-AMP, ATP, cAMP, and cGMP. Is devoid of monophosphatase and proteinase activities. Inhibits ADP-induced platelet aggregation and is cytotoxic to human keratinocytes. Kinetic parameters indicated a higher affinity for the substrate bis(p-nitrophenyl) phosphate compared to others snake venom PDEs. Is recognized by the crotalid antivenom produced by the Instituto Butantan. This chain is Venom phosphodiesterase CdcPDE, found in Crotalus durissus collilineatus (Brazilian rattlesnake).